Reading from the N-terminus, the 108-residue chain is U-scoloptoxin(16)-Sm1a (108 aa).

The first 19 residues, 1–19 (MNLFLVLFVFSFSVSQFFA), serve as a signal peptide directing secretion.

This sequence belongs to the scoloptoxin-16 family. In terms of processing, contains 4 disulfide bonds. Expressed by the venom gland.

The protein resides in the secreted. The polypeptide is U-scoloptoxin(16)-Sm1a (Scolopendra morsitans (Tanzanian blue ringleg centipede)).